The sequence spans 230 residues: Cytidylate kinase (230 aa).

12 to 20 lines the ATP pocket; sequence GPSGAGKGT.

It belongs to the cytidylate kinase family. Type 1 subfamily.

It is found in the cytoplasm. The enzyme catalyses CMP + ATP = CDP + ADP. The catalysed reaction is dCMP + ATP = dCDP + ADP. This chain is Cytidylate kinase, found in Shewanella oneidensis (strain ATCC 700550 / JCM 31522 / CIP 106686 / LMG 19005 / NCIMB 14063 / MR-1).